The primary structure comprises 352 residues: Putative F-box protein At5g14160 (352 aa).

One can recognise an F-box domain in the interval 14-60; sequence GVDWSELPEDVIRLVLRRLRLSDFHRARAVCSTWCRVWGDCVSKPNQ.

The chain is Putative F-box protein At5g14160 from Arabidopsis thaliana (Mouse-ear cress).